We begin with the raw amino-acid sequence, 145 residues long: Protein BUD31 homolog 1 (145 aa).

Belongs to the BUD31 (G10) family.

It is found in the nucleus. In Oryza sativa subsp. japonica (Rice), this protein is Protein BUD31 homolog 1.